The chain runs to 1816 residues: Kinesin-like protein KIF1B (1816 aa).

N-acetylserine is present on S2. Residues 5–354 (SVKVAVRVRP…LRYADRAKQI (350 aa)) form the Kinesin motor domain. Position 97-104 (97-104 (GQTGAGKS)) interacts with ATP. Residues 270-350 (NINKSLTTLG…TLSTLRYADR (81 aa)) are interaction with KIFBP. Residues 365-386 (NAKLVRELKEEVTRLKDLLRAQ) adopt a coiled-coil conformation. A disordered region spans residues 431–450 (FSTASMGSLTSSPSSCSLSS). Low complexity predominate over residues 432–450 (STASMGSLTSSPSSCSLSS). A coiled-coil region spans residues 470 to 502 (GEEAIERLKESEKIIAELNETWEEKLRKTEAIR). In terms of domain architecture, FHA spans 556 to 612 (TRVGQADAERRQDIVLSGAHIKEEHCIFRSERSNSGEVIVTLEPCERSETYVNGKRV). T647 and T652 each carry phosphothreonine. Residues Q663 and E665 each carry the phosphoserine modification. 2 coiled-coil regions span residues 668-737 (EKQG…EEEV) and 841-869 (SLEKLKQRLDLMREMYDRAGEMASSAQDE). A phosphoserine mark is found at S1054 and S1057. T1075 bears the Phosphothreonine mark. Residues N1141, S1416, S1454, and S1487 each carry the phosphoserine modification. Residues 1550-1570 (STTTFESAITPSESSGYDSGD) form a disordered region. The segment covering 1554–1566 (FESAITPSESSGY) has biased composition (polar residues). Phosphoserine is present on residues S1573, S1603, S1610, and S1613. The tract at residues 1617–1660 (RDPSESSFSSATLTPSSTCPSLVDSRSNSLDQKTPEANSRASSP) is disordered. Low complexity predominate over residues 1621 to 1634 (ESSFSSATLTPSST). Residues 1640-1658 (DSRSNSLDQKTPEANSRAS) show a composition bias toward polar residues. One can recognise a PH domain in the interval 1702–1799 (VSKKGYLHFK…WLYAFNPLLA (98 aa)).

The protein belongs to the TRAFAC class myosin-kinesin ATPase superfamily. Kinesin family. Unc-104 subfamily. Monomer. Interacts with KIFBP; positively regulates KIF1B microtubule motor activity. Interacts (via C-terminus end of the kinesin-motor domain) with CHP1; the interaction occurs in a calcium-dependent manner. In terms of assembly, interacts with MADD (via death domain); links this isoform to Rab3-carrying vesicles in anterograde synaptic vesicle transport. As to expression, isoform 3 is abundant in the skeletal muscle. It is also expressed in fetal brain, lung and kidney, and adult heart, placenta, testis, ovary and small intestine. Isoform 2 is abundant in the brain and also expressed in fetal heart, lung, liver and kidney, and adult skeletal muscle, placenta, liver, kidney, heart, spleen, thymus, prostate, testis, ovary, small intestine, colon and pancreas.

Its subcellular location is the cytoplasm. It localises to the cytoskeleton. It is found in the cytoplasmic vesicle. The protein resides in the secretory vesicle. The protein localises to the synaptic vesicle membrane. Its subcellular location is the mitochondrion. It catalyses the reaction ATP + H2O + a kinesin associated with a microtubule at position (n) = ADP + phosphate a kinesin associated with a microtubule at position (n+1, toward the plus end).. Functionally, has a plus-end-directed microtubule motor activity and functions as a motor for transport of vesicles and organelles along microtubules. Its function is as follows. Has a plus-end-directed microtubule motor activity and functions as a motor for anterograde synaptic vesicle transport along axonal microtubules from the cell body to the presynapse in neuronal cells. Functions as a downstream effector in a developmental apoptotic pathway that is activated when nerve growth factor (NGF) becomes limiting for neuronal progenitor cells. Has a plus-end-directed microtubule motor activity and functions as a motor for anterograde transport of mitochondria. The protein is Kinesin-like protein KIF1B of Homo sapiens (Human).